The chain runs to 181 residues: Putative D-tyrosyl-tRNA(Tyr) deacylase 2 (181 aa).

The protein belongs to the DTD family. Highly divergent. As to quaternary structure, homodimer.

It localises to the cytoplasm. Its function is as follows. May hydrolyze D-tyrosyl-tRNA(Tyr) into D-tyrosine and free tRNA(Tyr). Could be a defense mechanism against a harmful effect of D-tyrosine. The polypeptide is Putative D-tyrosyl-tRNA(Tyr) deacylase 2 (Leishmania major).